The primary structure comprises 286 residues: Energy-coupling factor transporter ATP-binding protein EcfA2 (286 aa).

The region spanning 3-245 (IKIENLTYTY…IDTLEKVGLA (243 aa)) is the ABC transporter domain. 40–47 (GHTGSGKS) is a binding site for ATP.

This sequence belongs to the ABC transporter superfamily. Energy-coupling factor EcfA family. Forms a stable energy-coupling factor (ECF) transporter complex composed of 2 membrane-embedded substrate-binding proteins (S component), 2 ATP-binding proteins (A component) and 2 transmembrane proteins (T component).

The protein localises to the cell membrane. ATP-binding (A) component of a common energy-coupling factor (ECF) ABC-transporter complex. Unlike classic ABC transporters this ECF transporter provides the energy necessary to transport a number of different substrates. This Clostridium acetobutylicum (strain ATCC 824 / DSM 792 / JCM 1419 / IAM 19013 / LMG 5710 / NBRC 13948 / NRRL B-527 / VKM B-1787 / 2291 / W) protein is Energy-coupling factor transporter ATP-binding protein EcfA2.